Here is a 450-residue protein sequence, read N- to C-terminus: UDP-N-acetylmuramoylalanine--D-glutamate ligase (450 aa).

ATP is bound at residue 119 to 125 (GSNGKTT).

This sequence belongs to the MurCDEF family.

Its subcellular location is the cytoplasm. It carries out the reaction UDP-N-acetyl-alpha-D-muramoyl-L-alanine + D-glutamate + ATP = UDP-N-acetyl-alpha-D-muramoyl-L-alanyl-D-glutamate + ADP + phosphate + H(+). The protein operates within cell wall biogenesis; peptidoglycan biosynthesis. Cell wall formation. Catalyzes the addition of glutamate to the nucleotide precursor UDP-N-acetylmuramoyl-L-alanine (UMA). The polypeptide is UDP-N-acetylmuramoylalanine--D-glutamate ligase (Bacillus cereus (strain Q1)).